A 489-amino-acid polypeptide reads, in one-letter code: Glucose-6-phosphate isomerase (489 aa).

The active-site Proton donor is the E309. Catalysis depends on residues H340 and K459.

Belongs to the GPI family.

Its subcellular location is the cytoplasm. It catalyses the reaction alpha-D-glucose 6-phosphate = beta-D-fructose 6-phosphate. It functions in the pathway carbohydrate biosynthesis; gluconeogenesis. Its pathway is carbohydrate degradation; glycolysis; D-glyceraldehyde 3-phosphate and glycerone phosphate from D-glucose: step 2/4. Catalyzes the reversible isomerization of glucose-6-phosphate to fructose-6-phosphate. The sequence is that of Glucose-6-phosphate isomerase from Idiomarina loihiensis (strain ATCC BAA-735 / DSM 15497 / L2-TR).